The following is a 206-amino-acid chain: Large ribosomal subunit protein uL4 (206 aa).

A disordered region spans residues 47-75 (GTQSAKTRAEVSGGGIKPWRQKGTGRARQ).

Belongs to the universal ribosomal protein uL4 family. As to quaternary structure, part of the 50S ribosomal subunit.

Functionally, one of the primary rRNA binding proteins, this protein initially binds near the 5'-end of the 23S rRNA. It is important during the early stages of 50S assembly. It makes multiple contacts with different domains of the 23S rRNA in the assembled 50S subunit and ribosome. In terms of biological role, forms part of the polypeptide exit tunnel. The chain is Large ribosomal subunit protein uL4 from Clostridium botulinum (strain ATCC 19397 / Type A).